The primary structure comprises 511 residues: 2,3-bisphosphoglycerate-independent phosphoglycerate mutase (511 aa).

Residue aspartate 12 coordinates Mn(2+). Tyrosine 36 is modified (phosphotyrosine). Serine 62 contributes to the Mn(2+) binding site. Serine 62 (phosphoserine intermediate) is an active-site residue. Substrate is bound by residues histidine 123, 153–154 (RD), arginine 185, arginine 191, 261–264 (RPDR), and lysine 336. Residues aspartate 403, histidine 407, aspartate 444, histidine 445, and histidine 462 each coordinate Mn(2+).

Belongs to the BPG-independent phosphoglycerate mutase family. In terms of assembly, monomer. Mn(2+) is required as a cofactor.

It catalyses the reaction (2R)-2-phosphoglycerate = (2R)-3-phosphoglycerate. It participates in carbohydrate degradation; glycolysis; pyruvate from D-glyceraldehyde 3-phosphate: step 3/5. Its activity is regulated as follows. Could be inhibited during sporulation by acidification of the forespore, thus allowing accumulation of the spore's large depot of 3-phosphoglyceric acid. Its function is as follows. Essential for rapid growth and for sporulation. Catalyzes the interconversion of 2-phosphoglycerate (2-PGA) and 3-phosphoglycerate (3-PGA). The sequence is that of 2,3-bisphosphoglycerate-independent phosphoglycerate mutase from Geobacillus stearothermophilus (Bacillus stearothermophilus).